A 236-amino-acid polypeptide reads, in one-letter code: Phosphoribosylaminoimidazole-succinocarboxamide synthase (236 aa).

The protein belongs to the SAICAR synthetase family.

It catalyses the reaction 5-amino-1-(5-phospho-D-ribosyl)imidazole-4-carboxylate + L-aspartate + ATP = (2S)-2-[5-amino-1-(5-phospho-beta-D-ribosyl)imidazole-4-carboxamido]succinate + ADP + phosphate + 2 H(+). Its pathway is purine metabolism; IMP biosynthesis via de novo pathway; 5-amino-1-(5-phospho-D-ribosyl)imidazole-4-carboxamide from 5-amino-1-(5-phospho-D-ribosyl)imidazole-4-carboxylate: step 1/2. The chain is Phosphoribosylaminoimidazole-succinocarboxamide synthase from Rickettsia massiliae (strain Mtu5).